A 100-amino-acid polypeptide reads, in one-letter code: Large ribosomal subunit protein bL21 (100 aa).

The protein belongs to the bacterial ribosomal protein bL21 family. In terms of assembly, part of the 50S ribosomal subunit. Contacts proteins L15 and L20.

Binds directly to 23S rRNA, probably serving to organize its structure. The chain is Large ribosomal subunit protein bL21 from Deinococcus radiodurans (strain ATCC 13939 / DSM 20539 / JCM 16871 / CCUG 27074 / LMG 4051 / NBRC 15346 / NCIMB 9279 / VKM B-1422 / R1).